The sequence spans 398 residues: Isopenicillin N epimerase (398 aa).

An N6-(pyridoxal phosphate)lysine modification is found at Lys-217.

The protein belongs to the class-V pyridoxal-phosphate-dependent aminotransferase family. The cofactor is pyridoxal 5'-phosphate.

The enzyme catalyses isopenicillin N = penicillin N. It functions in the pathway antibiotic biosynthesis; cephalosporin C biosynthesis. Catalyzes the reversible isomerization between isopenicillin N and penicillin N. In Streptomyces clavuligerus, this protein is Isopenicillin N epimerase (cefD).